We begin with the raw amino-acid sequence, 726 residues long: Type VI secretion system spike protein VgrG1c (726 aa).

The disordered stretch occupies residues 502 to 522 (ANATQSGTKSRSSKGGTPANF). A compositionally biased stretch (low complexity) spans 507-518 (SGTKSRSSKGGT).

This sequence belongs to the VgrG protein family. Forms homomultimers. Part of the type VI secretion system (T6SS).

It is found in the secreted. Functionally, part of the H1 type VI secretion system (H1-T6SS) specialized secretion system, which delivers several virulence factors in both prokaryotic and eukaryotic cells during infection. Allows the delivery of the Tse5/RhsP1 toxin to target cells where it exerts its toxicity. This Pseudomonas aeruginosa (strain ATCC 15692 / DSM 22644 / CIP 104116 / JCM 14847 / LMG 12228 / 1C / PRS 101 / PAO1) protein is Type VI secretion system spike protein VgrG1c.